An 839-amino-acid chain; its full sequence is Genome polyprotein (839 aa).

The span at 55-66 shows a compositional bias: polar residues; it reads TAEVGSHQSEPL. The disordered stretch occupies residues 55-76; sequence TAEVGSHQSEPLKTSVDKPGSK. 2 consecutive short sequence motifs ((L)YPX(n)L motif) follow at residues 167–171 and 200–205; these read YPHGL and YPVWEL. The segment covering 496-510 has biased composition (polar residues); it reads SGGFSTTVSTEQNVP. 2 disordered regions span residues 496–530 and 773–792; these read SGGF…NKGK and GDLE…RFES. Residues 766-836 form an involved in P1-2A pentamerization region; sequence MLDRIAGGDL…RKLKGLFSQS (71 aa). Over residues 780–792 the composition is skewed to basic and acidic residues; that stretch reads DDPRTDEDRRFES.

Belongs to the picornaviridae polyprotein family. As to quaternary structure, homodimer. Homomultimer; probably interacts with membranes in a multimeric form. Seems to assemble into amyloid-like fibers. In terms of assembly, homopentamer. Homooligomer. Interacts with capsid protein VP2. Interacts with capsid protein VP3. As to quaternary structure, interacts with capsid protein VP1. Interacts with capsid protein VP3. In terms of assembly, interacts with capsid protein VP1. Interacts with capsid protein VP2. Post-translationally, specific enzymatic cleavages by viral protease in vivo yield a variety of precursors and mature proteins. Polyprotein processing intermediates are produced, such as P1-2A which is a functional precursor of the structural proteins, VP0 which is a VP4-VP2 precursor, VP1-2A precursor, 3ABC precursor which is a stable and catalytically active precursor of 3A, 3B and 3C proteins, 3AB and 3CD precursors. The assembly signal 2A is removed from VP1-2A by a host protease, possibly host Cathepsin L. This cleavage occurs over a region of 3 amino-acids probably generating VP1 proteins with heterogeneous C-termini. During virion maturation, immature virions are rendered infectious following cleavage of VP0 into VP4 and VP2. This maturation seems to be an autocatalytic event triggered by the presence of RNA in the capsid and is followed by a conformational change of the particle. In terms of processing, the assembly signal 2A is removed from VP1-2A by a host protease, possibly host Cathepsin L in naked virions. This cleavage does not occur in enveloped virions. This cleavage occurs over a region of 3 amino-acids probably generating VP1 proteins with heterogeneous C-termini. Post-translationally, unlike other picornaviruses, does not seem to be myristoylated.

Its subcellular location is the virion. The protein resides in the host endosome. The protein localises to the host multivesicular body. It is found in the host membrane. Capsid proteins VP1, VP2, and VP3 form a closed capsid enclosing the viral positive strand RNA genome. All these proteins contain a beta-sheet structure called beta-barrel jelly roll. Together they form an icosahedral capsid (T=3) composed of 60 copies of each VP1, VP2, and VP3, with a diameter of approximately 300 Angstroms. VP1 is situated at the 12 fivefold axes, whereas VP2 and VP3 are located at the quasi-sixfold axes. The naked capsid interacts with the host receptor HAVCR1 to provide virion attachment to and probably entry into the target cell. Its function is as follows. VP0 precursor is a component of the immature procapsids. In terms of biological role, plays a role in the assembly of the 12 pentamers into an icosahedral structure. Has not been detected in mature virions, supposedly owing to its small size. Functionally, precursor component of immature procapsids that corresponds to an extended form of the structural protein VP1. After maturation, possibly by the host Cathepsin L, the assembly signal 2A is cleaved to give rise to the mature VP1 protein. Affects membrane integrity and causes an increase in membrane permeability. Its function is as follows. Functions as a viroporin. Affects membrane integrity and causes an increase in membrane permeability. Involved in host intracellular membrane rearrangements probably to give rise to the viral factories. Does not disrupt calcium homeostasis or glycoprotein trafficking. Antagonizes the innate immune response of the host by suppressing IFN-beta synthesis, which it achieves by interfering with the RIG-I/IFIH1 pathway. This chain is Genome polyprotein, found in Callithrix (Owl-faced monkey).